The primary structure comprises 299 residues: Bifunctional protein FolD (299 aa).

NADP(+) contacts are provided by residues 168 to 170 (GRS), S193, and I234.

Belongs to the tetrahydrofolate dehydrogenase/cyclohydrolase family. Homodimer.

The catalysed reaction is (6R)-5,10-methylene-5,6,7,8-tetrahydrofolate + NADP(+) = (6R)-5,10-methenyltetrahydrofolate + NADPH. The enzyme catalyses (6R)-5,10-methenyltetrahydrofolate + H2O = (6R)-10-formyltetrahydrofolate + H(+). It functions in the pathway one-carbon metabolism; tetrahydrofolate interconversion. Functionally, catalyzes the oxidation of 5,10-methylenetetrahydrofolate to 5,10-methenyltetrahydrofolate and then the hydrolysis of 5,10-methenyltetrahydrofolate to 10-formyltetrahydrofolate. This is Bifunctional protein FolD from Bartonella tribocorum (strain CIP 105476 / IBS 506).